The following is a 617-amino-acid chain: DNA mismatch repair protein MutL (617 aa).

Residues tyrosine 363–phenylalanine 394 form a disordered region. Basic and acidic residues predominate over residues serine 382–asparagine 392.

This sequence belongs to the DNA mismatch repair MutL/HexB family.

This protein is involved in the repair of mismatches in DNA. It is required for dam-dependent methyl-directed DNA mismatch repair. May act as a 'molecular matchmaker', a protein that promotes the formation of a stable complex between two or more DNA-binding proteins in an ATP-dependent manner without itself being part of a final effector complex. The protein is DNA mismatch repair protein MutL of Allorhizobium ampelinum (strain ATCC BAA-846 / DSM 112012 / S4) (Agrobacterium vitis (strain S4)).